We begin with the raw amino-acid sequence, 91 residues long: Large ribosomal subunit protein uL29 (91 aa).

Residues 67-91 form a disordered region; that stretch reads AAPLAESSAPAKTKSRARKSKKEAL. Residues 79–91 show a composition bias toward basic residues; it reads TKSRARKSKKEAL.

It belongs to the universal ribosomal protein uL29 family.

The protein is Large ribosomal subunit protein uL29 of Acidobacterium capsulatum (strain ATCC 51196 / DSM 11244 / BCRC 80197 / JCM 7670 / NBRC 15755 / NCIMB 13165 / 161).